We begin with the raw amino-acid sequence, 271 residues long: Protein ABHD14A (271 aa).

Residues 35–55 (VALLGLSLLLMLLLYVGLPGP) form a helical; Signal-anchor for type II membrane protein membrane-spanning segment. N-linked (GlcNAc...) asparagine glycosylation is present at Asn-67. Ser-171 serves as the catalytic Charge relay system. Residue Asn-201 is glycosylated (N-linked (GlcNAc...) asparagine). Active-site charge relay system residues include Asp-222 and His-249.

This sequence belongs to the AB hydrolase superfamily. ABHD14 family.

Its subcellular location is the cytoplasm. It localises to the membrane. Possible role in granule neuron development. The polypeptide is Protein ABHD14A (Homo sapiens (Human)).